The following is a 170-amino-acid chain: Transcription factor E (170 aa).

In terms of domain architecture, HTH TFE/IIEalpha-type spans 1–93 (MKEAYLYIVE…TWYVDDDVIR (93 aa)).

Belongs to the TFE family. In terms of assembly, monomer. Interaction with RNA polymerase subunits RpoF and RpoE is necessary for Tfe stimulatory transcription activity. Able to interact with Tbp and RNA polymerase in the absence of DNA promoter. Interacts both with the preinitiation and elongation complexes.

Its function is as follows. Transcription factor that plays a role in the activation of archaeal genes transcribed by RNA polymerase. Facilitates transcription initiation by enhancing TATA-box recognition by TATA-box-binding protein (Tbp), and transcription factor B (Tfb) and RNA polymerase recruitment. Not absolutely required for transcription in vitro, but particularly important in cases where Tbp or Tfb function is not optimal. It dynamically alters the nucleic acid-binding properties of RNA polymerases by stabilizing the initiation complex and destabilizing elongation complexes. Seems to translocate with the RNA polymerase following initiation and acts by binding to the non template strand of the transcription bubble in elongation complexes. This chain is Transcription factor E, found in Pyrobaculum neutrophilum (strain DSM 2338 / JCM 9278 / NBRC 100436 / V24Sta) (Thermoproteus neutrophilus).